Reading from the N-terminus, the 599-residue chain is Elongation factor 4 (599 aa).

One can recognise a tr-type G domain in the interval 5 to 187 (SHIRNFSIIA…RLVTTIPAPT (183 aa)). Residues 17 to 22 (DHGKST) and 134 to 137 (NKID) contribute to the GTP site.

It belongs to the TRAFAC class translation factor GTPase superfamily. Classic translation factor GTPase family. LepA subfamily.

The protein localises to the cell inner membrane. It carries out the reaction GTP + H2O = GDP + phosphate + H(+). In terms of biological role, required for accurate and efficient protein synthesis under certain stress conditions. May act as a fidelity factor of the translation reaction, by catalyzing a one-codon backward translocation of tRNAs on improperly translocated ribosomes. Back-translocation proceeds from a post-translocation (POST) complex to a pre-translocation (PRE) complex, thus giving elongation factor G a second chance to translocate the tRNAs correctly. Binds to ribosomes in a GTP-dependent manner. This Pseudomonas fluorescens (strain ATCC BAA-477 / NRRL B-23932 / Pf-5) protein is Elongation factor 4.